We begin with the raw amino-acid sequence, 455 residues long: Single-stranded DNA-binding protein homolog sam-10 (455 aa).

Residues 19-51 enclose the LisH domain; the sequence is ARDRLTSYIYEYLQQTGASKTAETFKEEVLSTN. 4 disordered regions span residues 217–249, 281–302, 314–343, and 357–442; these read PPPG…LNSP, SDHQ…TAGG, GPGS…HQPK, and EALT…NGEI. Composition is skewed to low complexity over residues 288 to 298 and 321 to 336; these read AGPAAAAPGAT and VATT…SSIG. The span at 396–406 shows a compositional bias: polar residues; sequence HSVNNNVNPGT. Residues 407–421 are compositionally biased toward low complexity; that stretch reads PGSNPLSNPMSNPPL.

In terms of tissue distribution, ubiquitously expressed with higher expression in the head and tail ganglia, the vulva and PLM neurons.

The protein resides in the cytoplasm. It is found in the nucleus. Its function is as follows. Involved cell autonomously in PLM neuron pre-synaptic differentiation by negatively regulating prk-2 expression and in neurite branch positioning. This Caenorhabditis elegans protein is Single-stranded DNA-binding protein homolog sam-10.